Reading from the N-terminus, the 367-residue chain is Splicing factor U2AF-associated protein 2 (367 aa).

The segment at 36–104 is disordered; that stretch reads YDPNSLKMNK…SKSENSEASP (69 aa). The span at 61-78 shows a compositional bias: basic and acidic residues; the sequence is TEGKESSNGEDRHTKRLY. 2 RRM domains span residues 112–193 and 268–329; these read VYIQ…KMRV and LLID…VVEA.

The protein belongs to the HTATSF1 family. In terms of assembly, interacts with the U2AF large and U2AF small subunits.

Has a role in pre-mRNA splicing. This Schizosaccharomyces pombe (strain 972 / ATCC 24843) (Fission yeast) protein is Splicing factor U2AF-associated protein 2 (uap2).